The chain runs to 425 residues: Serine--tRNA ligase (425 aa).

Thr230–Glu232 is an L-serine binding site. Position 261 to 263 (Arg261 to Glu263) interacts with ATP. Residue Glu284 coordinates L-serine. An ATP-binding site is contributed by Glu348–Ser351. Position 384 (Ser384) interacts with L-serine.

The protein belongs to the class-II aminoacyl-tRNA synthetase family. Type-1 seryl-tRNA synthetase subfamily. In terms of assembly, homodimer. The tRNA molecule binds across the dimer.

The protein resides in the cytoplasm. The catalysed reaction is tRNA(Ser) + L-serine + ATP = L-seryl-tRNA(Ser) + AMP + diphosphate + H(+). It catalyses the reaction tRNA(Sec) + L-serine + ATP = L-seryl-tRNA(Sec) + AMP + diphosphate + H(+). The protein operates within aminoacyl-tRNA biosynthesis; selenocysteinyl-tRNA(Sec) biosynthesis; L-seryl-tRNA(Sec) from L-serine and tRNA(Sec): step 1/1. Functionally, catalyzes the attachment of serine to tRNA(Ser). Is also able to aminoacylate tRNA(Sec) with serine, to form the misacylated tRNA L-seryl-tRNA(Sec), which will be further converted into selenocysteinyl-tRNA(Sec). The protein is Serine--tRNA ligase of Streptococcus pyogenes serotype M49 (strain NZ131).